A 369-amino-acid chain; its full sequence is Holliday junction branch migration complex subunit RuvB (369 aa).

Positions Met-1 to Arg-21 are disordered. A large ATPase domain (RuvB-L) region spans residues Met-1–Tyr-184. Residues Leu-23, Arg-24, Gly-65, Lys-68, Thr-69, Thr-70, Glu-131 to Tyr-133, Arg-174, Tyr-184, and Arg-221 contribute to the ATP site. Thr-69 provides a ligand contact to Mg(2+). Positions Thr-185 to Glu-255 are small ATPAse domain (RuvB-S). Residues His-258–Asp-369 are head domain (RuvB-H). Residues Arg-294, Arg-313, and Arg-318 each coordinate DNA.

It belongs to the RuvB family. In terms of assembly, homohexamer. Forms an RuvA(8)-RuvB(12)-Holliday junction (HJ) complex. HJ DNA is sandwiched between 2 RuvA tetramers; dsDNA enters through RuvA and exits via RuvB. An RuvB hexamer assembles on each DNA strand where it exits the tetramer. Each RuvB hexamer is contacted by two RuvA subunits (via domain III) on 2 adjacent RuvB subunits; this complex drives branch migration. In the full resolvosome a probable DNA-RuvA(4)-RuvB(12)-RuvC(2) complex forms which resolves the HJ.

Its subcellular location is the cytoplasm. The enzyme catalyses ATP + H2O = ADP + phosphate + H(+). The RuvA-RuvB-RuvC complex processes Holliday junction (HJ) DNA during genetic recombination and DNA repair, while the RuvA-RuvB complex plays an important role in the rescue of blocked DNA replication forks via replication fork reversal (RFR). RuvA specifically binds to HJ cruciform DNA, conferring on it an open structure. The RuvB hexamer acts as an ATP-dependent pump, pulling dsDNA into and through the RuvAB complex. RuvB forms 2 homohexamers on either side of HJ DNA bound by 1 or 2 RuvA tetramers; 4 subunits per hexamer contact DNA at a time. Coordinated motions by a converter formed by DNA-disengaged RuvB subunits stimulates ATP hydrolysis and nucleotide exchange. Immobilization of the converter enables RuvB to convert the ATP-contained energy into a lever motion, pulling 2 nucleotides of DNA out of the RuvA tetramer per ATP hydrolyzed, thus driving DNA branch migration. The RuvB motors rotate together with the DNA substrate, which together with the progressing nucleotide cycle form the mechanistic basis for DNA recombination by continuous HJ branch migration. Branch migration allows RuvC to scan DNA until it finds its consensus sequence, where it cleaves and resolves cruciform DNA. In Bartonella bacilliformis (strain ATCC 35685 / KC583 / Herrer 020/F12,63), this protein is Holliday junction branch migration complex subunit RuvB.